The sequence spans 313 residues: Porphobilinogen deaminase (313 aa).

S-(dipyrrolylmethanemethyl)cysteine is present on C241.

This sequence belongs to the HMBS family. Monomer. The cofactor is dipyrromethane.

The enzyme catalyses 4 porphobilinogen + H2O = hydroxymethylbilane + 4 NH4(+). Its pathway is porphyrin-containing compound metabolism; protoporphyrin-IX biosynthesis; coproporphyrinogen-III from 5-aminolevulinate: step 2/4. The protein operates within porphyrin-containing compound metabolism; chlorophyll biosynthesis. Tetrapolymerization of the monopyrrole PBG into the hydroxymethylbilane pre-uroporphyrinogen in several discrete steps. The polypeptide is Porphobilinogen deaminase (Chlorobium phaeovibrioides (strain DSM 265 / 1930) (Prosthecochloris vibrioformis (strain DSM 265))).